Reading from the N-terminus, the 1374-residue chain is Alpha,alpha-trehalose-phosphate synthase [UDP-forming] 1 (1374 aa).

Disordered regions lie at residues 28–66 (DTGKVPTAPPDVFFSTENEPEDCTPVKMDPFDRPKSDKD), 86–117 (YTPGKEKGVDQDESDDMTESEDHDEMAKDDEG), and 1352–1374 (KADSYYDDSDTPMDQEDTPSKQQ). Composition is skewed to basic and acidic residues over residues 56–66 (DPFDRPKSDKD) and 86–95 (YTPGKEKGVD). 2 stretches are compositionally biased toward acidic residues: residues 96 to 109 (QDESDDMTESEDHD) and 1356 to 1368 (YYDDSDTPMDQED).

The protein in the N-terminal section; belongs to the glycosyltransferase 20 family. This sequence in the C-terminal section; belongs to the gob-1 trehalose phosphatase family.

It carries out the reaction D-glucose 6-phosphate + UDP-alpha-D-glucose = alpha,alpha-trehalose 6-phosphate + UDP + H(+). In terms of biological role, catalyzes the production of trehalose from glucose-6-phosphate and UDP-alpha-D-glucose in a 2 step process. In Caenorhabditis briggsae, this protein is Alpha,alpha-trehalose-phosphate synthase [UDP-forming] 1 (tps-1).